Consider the following 312-residue polypeptide: Erlin (312 aa).

The Cytoplasmic segment spans residues 1–3 (MLT). The helical transmembrane segment at 4-24 (ELALGLFALWIAIFSQALHKI) threads the bilayer. Topologically, residues 25–312 (EEGHVGVYYR…FVMGTTQQTV (288 aa)) are lumenal. An N-linked (GlcNAc...) asparagine glycan is attached at N104.

Belongs to the band 7/mec-2 family. In terms of assembly, seems to form a multimeric complex. Expressed in the germline only.

It localises to the endoplasmic reticulum membrane. The chain is Erlin from Caenorhabditis elegans.